We begin with the raw amino-acid sequence, 101 residues long: uncharacterized protein (101 aa).

This is an uncharacterized protein from Neurospora crassa (strain ATCC 24698 / 74-OR23-1A / CBS 708.71 / DSM 1257 / FGSC 987).